The sequence spans 258 residues: Triosephosphate isomerase (258 aa).

Residue asparagine 11–lysine 13 coordinates substrate. Residue histidine 101 is the Electrophile of the active site. Glutamate 173 acts as the Proton acceptor in catalysis. Substrate is bound by residues glycine 179, serine 219, and glycine 240 to glycine 241.

This sequence belongs to the triosephosphate isomerase family. Homodimer.

It localises to the cytoplasm. It catalyses the reaction D-glyceraldehyde 3-phosphate = dihydroxyacetone phosphate. The protein operates within carbohydrate biosynthesis; gluconeogenesis. Its pathway is carbohydrate degradation; glycolysis; D-glyceraldehyde 3-phosphate from glycerone phosphate: step 1/1. Its function is as follows. Involved in the gluconeogenesis. Catalyzes stereospecifically the conversion of dihydroxyacetone phosphate (DHAP) to D-glyceraldehyde-3-phosphate (G3P). The polypeptide is Triosephosphate isomerase (Streptomyces coelicolor (strain ATCC BAA-471 / A3(2) / M145)).